A 263-amino-acid chain; its full sequence is ATP synthase subunit a (263 aa).

Positions 1–14 are cleaved as a propeptide — removed in mature form; that stretch reads MYLNNNNNMKYYIN. 6 helical membrane passes run 35-57, 95-117, 129-151, 156-178, 191-213, and 228-250; these read FSFINITNFGLYTMITLLVILTM, VWGYYFPLVYTFFITIFTMNLIS, VVFVVSMSMIIWLGTTIIGFYTH, FGLFLPTGTPLILVPLLVSIELL, LSANIMAGHLLIVILGGLLFNLM, and IAILGIVCLEFAITIIQAYVWCI.

The protein belongs to the ATPase A chain family. In terms of assembly, F-type ATPases have 2 components, CF(1) - the catalytic core - and CF(0) - the membrane proton channel. In yeast, the dimeric form of ATP synthase consists of 18 polypeptides: alpha, beta, gamma, delta, epsilon, 4 (B), 5 (OSCP), 6 (A), 8, 9 (C), d, E (Tim11), f, g, h, i, j and k.

It localises to the mitochondrion inner membrane. Its function is as follows. Mitochondrial membrane ATP synthase (F(1)F(0) ATP synthase or Complex V) produces ATP from ADP in the presence of a proton gradient across the membrane which is generated by electron transport complexes of the respiratory chain. F-type ATPases consist of two structural domains, F(1) - containing the extramembraneous catalytic core and F(0) - containing the membrane proton channel, linked together by a central stalk and a peripheral stalk. During catalysis, ATP synthesis in the catalytic domain of F(1) is coupled via a rotary mechanism of the central stalk subunits to proton translocation. Key component of the proton channel; it may play a direct role in the translocation of protons across the membrane. This Eremothecium gossypii (strain ATCC 10895 / CBS 109.51 / FGSC 9923 / NRRL Y-1056) (Yeast) protein is ATP synthase subunit a (ATP6).